The following is a 308-amino-acid chain: MQEIESLHQSVLLQEVLQAFAPLEEGVLIDCTLGLGGHSKALLSQKPHLKLIGIDKDKFAQEIAKERLKAFEGRYNLLSGGFAKRFKEALEMHGERIKGVLVDLGVSSLQLDDDNRGFNFHSHALDMRMDLESDLNAQKVINSYSVVALEKIFRDYGEIKEYKKIAHKIAERRAKKPFKDAKDLSDFLSSFSKNKKIHPATLVFQAVRIEVNSELEELKEFLQCARNLKGAILCVISFHSLEDALVKNAFKDYAKNCICDPSSFKCTCSNNHALGTILTKKPIIPSPEEIKNNRRSRSAKMRVFQFKP.

S-adenosyl-L-methionine is bound by residues 36–38, aspartate 55, phenylalanine 86, aspartate 103, and glutamine 110; that span reads GGH.

This sequence belongs to the methyltransferase superfamily. RsmH family.

Its subcellular location is the cytoplasm. The catalysed reaction is cytidine(1402) in 16S rRNA + S-adenosyl-L-methionine = N(4)-methylcytidine(1402) in 16S rRNA + S-adenosyl-L-homocysteine + H(+). Functionally, specifically methylates the N4 position of cytidine in position 1402 (C1402) of 16S rRNA. This Helicobacter pylori (strain P12) protein is Ribosomal RNA small subunit methyltransferase H.